The primary structure comprises 313 residues: Porphobilinogen deaminase (313 aa).

The residue at position 242 (C242) is an S-(dipyrrolylmethanemethyl)cysteine.

The protein belongs to the HMBS family. In terms of assembly, monomer. It depends on dipyrromethane as a cofactor.

The enzyme catalyses 4 porphobilinogen + H2O = hydroxymethylbilane + 4 NH4(+). The protein operates within porphyrin-containing compound metabolism; protoporphyrin-IX biosynthesis; coproporphyrinogen-III from 5-aminolevulinate: step 2/4. In terms of biological role, tetrapolymerization of the monopyrrole PBG into the hydroxymethylbilane pre-uroporphyrinogen in several discrete steps. This is Porphobilinogen deaminase from Klebsiella pneumoniae subsp. pneumoniae (strain ATCC 700721 / MGH 78578).